A 472-amino-acid chain; its full sequence is Homeobox protein PKNOX2 (472 aa).

A disordered region spans residues 1 to 62 (MMQHASPAPA…STPVPSAPID (62 aa)). The segment covering 26 to 38 (DSPQMTATAQPPS) has biased composition (polar residues). Residues 46-56 (SAPSAAASTPV) show a composition bias toward low complexity. Residues 96–179 (GSECITSASF…MHSDNLLRND (84 aa)) enclose the MEIS N-terminal domain. Positions 291–350 (KRGVLPKHATNIMRSWLFQHLMHPYPTEDEKRQIAAQTNLTLLQVNNWFINARRRILQPM) form a DNA-binding region, homeobox. 3 disordered regions span residues 351-371 (LDASNPDPAPKAKKIKSQHRP), 386-405 (QQQGGAPGTNPDGSINLDNL), and 422-472 (MAAH…DSLE). The span at 361 to 371 (KAKKIKSQHRP) shows a compositional bias: basic residues. Positions 429–454 (LDGTEEEDEDEMEEEEEEELEEEVDE) are enriched in acidic residues.

Belongs to the TALE/MEIS homeobox family.

It is found in the nucleus. In Homo sapiens (Human), this protein is Homeobox protein PKNOX2 (PKNOX2).